The chain runs to 337 residues: uncharacterized protein (337 aa).

2 consecutive transmembrane segments (helical) span residues 4–24 (FIFFFKNYCYISGSMLLFSLI) and 26–46 (LLLWIISLYCVGLVFWILFAL).

Belongs to the plectrovirus ORF2 family.

It is found in the host membrane. This is an uncharacterized protein from Spiroplasma melliferum (SpV1).